The sequence spans 332 residues: ADP-L-glycero-D-manno-heptose-6-epimerase (332 aa).

NADP(+)-binding positions include 10–11, 31–32, lysine 38, lysine 53, 75–79, and asparagine 92; these read MI, DK, and MGACS. Tyrosine 145 (proton acceptor) is an active-site residue. Lysine 149 is a binding site for NADP(+). Position 173 (asparagine 173) interacts with substrate. NADP(+) contacts are provided by valine 174 and lysine 182. Catalysis depends on lysine 182, which acts as the Proton acceptor. Substrate is bound by residues arginine 184, histidine 191, 205–208, arginine 219, and tyrosine 290; that span reads FKSY.

Belongs to the NAD(P)-dependent epimerase/dehydratase family. HldD subfamily. As to quaternary structure, homopentamer. NADP(+) is required as a cofactor.

The catalysed reaction is ADP-D-glycero-beta-D-manno-heptose = ADP-L-glycero-beta-D-manno-heptose. It participates in nucleotide-sugar biosynthesis; ADP-L-glycero-beta-D-manno-heptose biosynthesis; ADP-L-glycero-beta-D-manno-heptose from D-glycero-beta-D-manno-heptose 7-phosphate: step 4/4. In terms of biological role, catalyzes the interconversion between ADP-D-glycero-beta-D-manno-heptose and ADP-L-glycero-beta-D-manno-heptose via an epimerization at carbon 6 of the heptose. In Fusobacterium nucleatum subsp. nucleatum (strain ATCC 25586 / DSM 15643 / BCRC 10681 / CIP 101130 / JCM 8532 / KCTC 2640 / LMG 13131 / VPI 4355), this protein is ADP-L-glycero-D-manno-heptose-6-epimerase.